Here is a 247-residue protein sequence, read N- to C-terminus: NAD(P)H-quinone oxidoreductase subunit K (247 aa).

4 residues coordinate [4Fe-4S] cluster: cysteine 63, cysteine 64, cysteine 128, and cysteine 159. The tract at residues 218-247 (TRQAPPKELTEAIGMEVPPALASQKQKEEA) is disordered.

The protein belongs to the complex I 20 kDa subunit family. NDH-1 can be composed of about 15 different subunits; different subcomplexes with different compositions have been identified which probably have different functions. [4Fe-4S] cluster is required as a cofactor.

The protein resides in the cellular thylakoid membrane. It carries out the reaction a plastoquinone + NADH + (n+1) H(+)(in) = a plastoquinol + NAD(+) + n H(+)(out). The catalysed reaction is a plastoquinone + NADPH + (n+1) H(+)(in) = a plastoquinol + NADP(+) + n H(+)(out). Functionally, NDH-1 shuttles electrons from an unknown electron donor, via FMN and iron-sulfur (Fe-S) centers, to quinones in the respiratory and/or the photosynthetic chain. The immediate electron acceptor for the enzyme in this species is believed to be plastoquinone. Couples the redox reaction to proton translocation, and thus conserves the redox energy in a proton gradient. Cyanobacterial NDH-1 also plays a role in inorganic carbon-concentration. This Crocosphaera subtropica (strain ATCC 51142 / BH68) (Cyanothece sp. (strain ATCC 51142)) protein is NAD(P)H-quinone oxidoreductase subunit K.